Here is a 674-residue protein sequence, read N- to C-terminus: Phosphopantothenoylcysteine decarboxylase subunit VHS3 (674 aa).

Disordered stretches follow at residues 1–164 (MTNK…SILS), 190–230 (LNSD…RPSV), 348–368 (QHNSIDTSFNSTNSNAGNITG), 384–426 (TSSN…SNVV), and 575–674 (VSAG…LQRS). Residues 15–81 (ASNTLSGAEQ…TSGAVVSNTP (67 aa)) show a composition bias toward polar residues. Thr90 is subject to Phosphothreonine. Over residues 106 to 116 (EQTPPNQVARQ) the composition is skewed to polar residues. Over residues 137-150 (NLKDINTKVPKDGE) the composition is skewed to basic and acidic residues. Polar residues predominate over residues 152-164 (SASSFSTPTSILS). The span at 198-212 (SPRKEHPHFYVEDPL) shows a compositional bias: basic and acidic residues. A compositionally biased stretch (low complexity) spans 214-230 (TPSVRSRSNSTSPRPSV). A compositionally biased stretch (polar residues) spans 351–368 (SIDTSFNSTNSNAGNITG). The segment covering 384 to 395 (TSSNSAASQTNN) has biased composition (low complexity). Positions 403–426 (MASTTGFPSTLGGSRTYSNSSNVV) are enriched in polar residues. Residues 580 to 591 (EEEEDEDNDEED) are compositionally biased toward acidic residues. Residues 592–602 (DNKKNDTGGKD) show a composition bias toward basic and acidic residues. A compositionally biased stretch (acidic residues) spans 603 to 660 (EDNDDDDDDDDDDDDDDDDDDDDDDDDDDDDDDDDDDDDDDDDDDDDDEDDEDEDEDD). Basic and acidic residues predominate over residues 661-674 (EGKKKEDKGGLQRS).

The protein belongs to the HFCD (homooligomeric flavin containing Cys decarboxylase) superfamily. As to quaternary structure, interacts with the C-terminal domain of PPZ1. Component of the phosphopantothenoylcysteine decarboxylase (PPCDC) complex, a heterotrimer composed of CAB3, SIS2 and VHS3.

Its function is as follows. Component of the phosphopantothenoylcysteine decarboxylase (PPCDC) involved in the coenzyme A synthesis. Acts as an inhibitory subunit of protein phosphatase PPZ1, which is involved in many cellular processes such as G1-S transition or salt tolerance. This chain is Phosphopantothenoylcysteine decarboxylase subunit VHS3 (VHS3), found in Saccharomyces cerevisiae (strain ATCC 204508 / S288c) (Baker's yeast).